A 955-amino-acid polypeptide reads, in one-letter code: B3 domain-containing protein Os07g0563300 (955 aa).

Composition is skewed to pro residues over residues 1–20 (MSSPAQPPPTRPPVAAPPPS) and 29–45 (VQPPPLQPKPPPHPQQP). 2 disordered regions span residues 1–81 (MSSP…QRPR) and 325–392 (ARKG…SSSL). Low complexity predominate over residues 62–71 (QHQQQQQGPP). Positions 332–342 (DPCSSVSTTFK) are enriched in polar residues. Over residues 343-355 (LDSHHPSILKDDP) the composition is skewed to basic and acidic residues. Residues 382-392 (QQQQQMASSSL) show a composition bias toward low complexity. Residues 453-554 (FEKMLSASDA…KLVMGFRKAT (102 aa)) constitute a DNA-binding region (TF-B3). 2 stretches are compositionally biased toward polar residues: residues 556–565 (LSAEQDQPTK) and 598–608 (NTESKSSSPVE). The interval 556–642 (LSAEQDQPTK…PLPVKRKATS (87 aa)) is disordered. The CW-type zinc finger occupies 708-758 (SGENHQWAQCEDCSKWRKLPVDALLPSKWTCSDNKWDSERSSCDSAQEINM). Zn(2+) is bound by residues Cys717, Cys720, Cys738, and Cys750. The interval 856 to 955 (MMRREKRQQS…ATRLLRDNPT (100 aa)) is disordered. Over residues 862-877 (RQQSEKDSGVPRKREP) the composition is skewed to basic and acidic residues. 2 stretches are compositionally biased toward polar residues: residues 878 to 900 (GQSSEPVPQSGSGAHPTSTSSPH) and 920 to 933 (TSSPVKNQIDLNSQ). The segment covering 939–955 (EQSPKSDATRLLRDNPT) has biased composition (basic and acidic residues).

The protein localises to the nucleus. In Oryza sativa subsp. japonica (Rice), this protein is B3 domain-containing protein Os07g0563300.